The sequence spans 169 residues: MHSRKGASSLPRGRGAGKKTELTEEQRQEIKEAFDLFDTDGSGCIDAKELKVAMRALGFEPKKEEIRKMIADVDKDGTGSVDFQEFLSLMTVKMAERDPREEILKAFRLFDDDETGKISFKNLKRVSKELGENLTDEELQEMIDEADRDGDGEINEEEFIRIMRKTNLF.

Residues 1–21 (MHSRKGASSLPRGRGAGKKTE) form an essential for homooligomerization region. The tract at residues 1 to 25 (MHSRKGASSLPRGRGAGKKTELTEE) is disordered. EF-hand domains follow at residues 25 to 60 (EQRQ…LGFE), 61 to 96 (PKKE…KMAE), 98 to 133 (DPRE…LGEN), and 134 to 169 (LTDE…TNLF). Residues Asp-38, Asp-40, Ser-42, Cys-44, Glu-49, Asp-74, Asp-76, Thr-78, Ser-80, and Glu-85 each contribute to the Ca(2+) site.

This sequence belongs to the centrin family. Monomer. Homooligomerizes in a Ca(2+)-dependent manner. Interaction via the C-terminus with other proteins disrupts and/or prevents homooligomerization. Interacts with SFI1.

The protein localises to the cytoplasm. It localises to the cytoskeleton. The protein resides in the microtubule organizing center. It is found in the centrosome. In terms of biological role, acts as a calcium sensor. Part of the centrosome outer core complex. The protein is Centrin-1 of Toxoplasma gondii (strain ATCC 50611 / Me49).